Reading from the N-terminus, the 163-residue chain is Endoribonuclease YbeY (163 aa).

Residues His-129, His-133, and His-139 each coordinate Zn(2+).

This sequence belongs to the endoribonuclease YbeY family. It depends on Zn(2+) as a cofactor.

It is found in the cytoplasm. Its function is as follows. Single strand-specific metallo-endoribonuclease involved in late-stage 70S ribosome quality control and in maturation of the 3' terminus of the 16S rRNA. This is Endoribonuclease YbeY from Picosynechococcus sp. (strain ATCC 27264 / PCC 7002 / PR-6) (Agmenellum quadruplicatum).